The chain runs to 293 residues: Small ribosomal subunit biogenesis GTPase RsgA (293 aa).

The region spanning 63–223 is the CP-type G domain; sequence KNQLNRPPIA…VADTPGFSSL (161 aa). GTP contacts are provided by residues 112-115 and 166-174; these read SKTD and GQSGVGKSS. Residues Cys247, Cys252, His254, and Cys260 each coordinate Zn(2+).

It belongs to the TRAFAC class YlqF/YawG GTPase family. RsgA subfamily. Monomer. Associates with 30S ribosomal subunit, binds 16S rRNA. Requires Zn(2+) as cofactor.

It is found in the cytoplasm. Its function is as follows. One of several proteins that assist in the late maturation steps of the functional core of the 30S ribosomal subunit. Helps release RbfA from mature subunits. May play a role in the assembly of ribosomal proteins into the subunit. Circularly permuted GTPase that catalyzes slow GTP hydrolysis, GTPase activity is stimulated by the 30S ribosomal subunit. This is Small ribosomal subunit biogenesis GTPase RsgA from Shouchella clausii (strain KSM-K16) (Alkalihalobacillus clausii).